We begin with the raw amino-acid sequence, 60 residues long: Large ribosomal subunit protein bL32 (60 aa).

This sequence belongs to the bacterial ribosomal protein bL32 family.

This is Large ribosomal subunit protein bL32 from Persephonella marina (strain DSM 14350 / EX-H1).